The sequence spans 373 residues: tRNA-specific 2-thiouridylase MnmA (373 aa).

Residues 12–19 and M38 each bind ATP; that span reads GMSGGVDS. An interaction with target base in tRNA region spans residues 98 to 100; it reads NPD. Catalysis depends on C103, which acts as the Nucleophile. Residues C103 and C200 are joined by a disulfide bond. Residue G127 coordinates ATP. Residues 150 to 152 are interaction with tRNA; it reads KDQ. C200 functions as the Cysteine persulfide intermediate in the catalytic mechanism. Residues 312 to 313 are interaction with tRNA; that stretch reads RY.

This sequence belongs to the MnmA/TRMU family.

The protein resides in the cytoplasm. It carries out the reaction S-sulfanyl-L-cysteinyl-[protein] + uridine(34) in tRNA + AH2 + ATP = 2-thiouridine(34) in tRNA + L-cysteinyl-[protein] + A + AMP + diphosphate + H(+). Functionally, catalyzes the 2-thiolation of uridine at the wobble position (U34) of tRNA, leading to the formation of s(2)U34. The sequence is that of tRNA-specific 2-thiouridylase MnmA from Streptococcus mutans serotype c (strain ATCC 700610 / UA159).